The following is a 546-amino-acid chain: CTP synthase (546 aa).

Residues 1–267 (MTKFIFVTGG…AEQVLDILQL (267 aa)) form an amidoligase domain region. Ser13 is a binding site for CTP. Ser13 contacts UTP. Position 14–19 (14–19 (SIGKGI)) interacts with ATP. Tyr54 contributes to the L-glutamine binding site. Residue Asp71 coordinates ATP. Positions 71 and 141 each coordinate Mg(2+). CTP is bound by residues 148–150 (DIE), 188–193 (KTKPTQ), and Lys224. UTP-binding positions include 188–193 (KTKPTQ) and Lys224. The Glutamine amidotransferase type-1 domain maps to 292–534 (EVAIVGKYVR…IKAALGSDLT (243 aa)). L-glutamine is bound at residue Gly354. Cys381 functions as the Nucleophile; for glutamine hydrolysis in the catalytic mechanism. L-glutamine-binding positions include 382-385 (LGMQ), Glu405, and Arg462. Catalysis depends on residues His507 and Glu509.

It belongs to the CTP synthase family. Homotetramer.

It catalyses the reaction UTP + L-glutamine + ATP + H2O = CTP + L-glutamate + ADP + phosphate + 2 H(+). The catalysed reaction is L-glutamine + H2O = L-glutamate + NH4(+). It carries out the reaction UTP + NH4(+) + ATP = CTP + ADP + phosphate + 2 H(+). It functions in the pathway pyrimidine metabolism; CTP biosynthesis via de novo pathway; CTP from UDP: step 2/2. Allosterically activated by GTP, when glutamine is the substrate; GTP has no effect on the reaction when ammonia is the substrate. The allosteric effector GTP functions by stabilizing the protein conformation that binds the tetrahedral intermediate(s) formed during glutamine hydrolysis. Inhibited by the product CTP, via allosteric rather than competitive inhibition. Functionally, catalyzes the ATP-dependent amination of UTP to CTP with either L-glutamine or ammonia as the source of nitrogen. Regulates intracellular CTP levels through interactions with the four ribonucleotide triphosphates. The protein is CTP synthase of Synechococcus sp. (strain ATCC 27144 / PCC 6301 / SAUG 1402/1) (Anacystis nidulans).